The primary structure comprises 362 residues: Probable cinnamyl alcohol dehydrogenase 9 (362 aa).

Cys45 serves as a coordination point for Zn(2+). Ser47 contributes to the NADP(+) binding site. Positions 67, 68, 98, 101, 104, 112, and 167 each coordinate Zn(2+). Residues Thr171, 192–197 (GLGGLG), 215–220 (STSPWK), Thr255, Gly279, and 302–304 (SMI) contribute to the NADP(+) site.

This sequence belongs to the zinc-containing alcohol dehydrogenase family. Homodimer. The cofactor is Zn(2+).

It carries out the reaction (E)-cinnamyl alcohol + NADP(+) = (E)-cinnamaldehyde + NADPH + H(+). The enzyme catalyses (E)-coniferol + NADP(+) = (E)-coniferaldehyde + NADPH + H(+). It catalyses the reaction (E)-sinapyl alcohol + NADP(+) = (E)-sinapaldehyde + NADPH + H(+). The catalysed reaction is (E)-4-coumaroyl alcohol + NADP(+) = (E)-4-coumaraldehyde + NADPH + H(+). It carries out the reaction (E)-caffeyl alcohol + NADP(+) = (E)-caffeyl aldehyde + NADPH + H(+). It functions in the pathway aromatic compound metabolism; phenylpropanoid biosynthesis. In terms of biological role, involved in lignin biosynthesis. Catalyzes the final step specific for the production of lignin monomers. Catalyzes the NADPH-dependent reduction of coniferaldehyde, 5-hydroxyconiferaldehyde, sinapaldehyde, 4-coumaraldehyde and caffeyl aldehyde to their respective alcohols. The chain is Probable cinnamyl alcohol dehydrogenase 9 from Oryza sativa subsp. japonica (Rice).